Here is a 992-residue protein sequence, read N- to C-terminus: MKGLGDSRPRHLSDSLDPPHEPLFAGPDRNPYLLSPTEAFAREARFPGQNTLPGDGLFPLNNQLPPPSSTFPRIHYNSHFEVPEESPFPSHAQATKINRLPANLLDQFEKQLPIHRDGFSTLQFPRGEAKARGESPGRIRHLVHSVQRLFFTKAPSMEGTAGKVGGNGSKKGGLEDGKGRRAKSKERAKAGEPKRRSRSNISGWWSSDDNLDGEGGAFRSGPASGLMTLGRQQERTQPRYFMHAYNTISGHMLKTTKNTTTELTAPPPPPAPPATCPSLGVGTDTNYVKRGSWSTLTLSHAHEVCQKTSATLDKSLLKSKSCHQGLAYHYLQVPGGGGEWSTTLLSPRDMDSTAEGPIPCRRMRSGSYIKAMGDEDSDESGGGSPKPSPKTAARRQSYLRATQQSLGEQSNPRRSLDRLDSVDMLLPSKCPSWEDDYNPISDSLNDSSCISQVFGQASLIPQLFGHDQQVREADLSDQYEAACESACSEAESTTAEALDLPLPSYFRSRSHSYLRAIQAGCSQEEDSVSLQSLSPPPSTGSLSNSRTLPSSSCLVAYKKTPPPVPPRTTSKPFISVTVQSSTESAQDTYLDSQDHKSEVTSQSGLSNSSDSLDSSTRPPSVTRGGITPGPEAPEPPPKHAALKSEQGTLTSSESHSEAIPKRKLSSIGIQVDCIQPVPKEEPSPATKFQSIGIQVEDDWRSSAPSHSMSSRRDTDSDTQDANDSSCKSSERSLPDCTSHPNSISIDAGPRQAPKIAQIKRNLSYGDNSDPALEASSLPPPDPWLETSSSSPAEPAQPGACRRDGYWFLKLLQAETERLEGWCCQMDKETKENNLSEEVLGKVLSAVGSAQLLMSQKFQQFRGLCEQNLNPDANPRPTAQDLAGFWDLLQLSIEDISMKFDELYHLKANSWQLVETPEKRKEEKKPPPPVPKKPAKSKAAVSRDKASDAGDKQRQEARKRLLAAKRAASVRQNSATESADSIEIYVPEAQTRL.

The span at 1-20 shows a compositional bias: basic and acidic residues; that stretch reads MKGLGDSRPRHLSDSLDPPH. 2 disordered regions span residues 1–31 and 157–225; these read MKGL…DRNP and MEGT…PASG. Residues 162 to 171 show a composition bias toward gly residues; the sequence is GKVGGNGSKK. Positions 172–194 are enriched in basic and acidic residues; that stretch reads GGLEDGKGRRAKSKERAKAGEPK. Over residues 199–208 the composition is skewed to polar residues; it reads SNISGWWSSD. Residues serine 206 and serine 207 each carry the phosphoserine modification. The residue at position 290 (arginine 290) is an Omega-N-methylarginine. The segment at 342–396 is disordered; it reads TTLLSPRDMDSTAEGPIPCRRMRSGSYIKAMGDEDSDESGGGSPKPSPKTAARRQ. Phosphoserine occurs at positions 377, 380, 384, 388, 405, 415, and 421. Disordered regions lie at residues 527–751, 763–798, and 915–992; these read SVSL…GPRQ, SYGD…AQPG, and TPEK…QTRL. A compositionally biased stretch (low complexity) spans 528-554; that stretch reads VSLQSLSPPPSTGSLSNSRTLPSSSCL. Residues 576–591 show a composition bias toward polar residues; that stretch reads VTVQSSTESAQDTYLD. A phosphoserine mark is found at serine 580, serine 581, serine 609, serine 611, serine 665, and serine 744. Positions 600 to 620 are enriched in low complexity; that stretch reads TSQSGLSNSSDSLDSSTRPPS. Residue threonine 915 is modified to Phosphothreonine. Composition is skewed to basic and acidic residues over residues 915 to 925 and 940 to 958; these read TPEKRKEEKKP and VSRD…EARK. Positions 969–978 are enriched in polar residues; the sequence is VRQNSATESA. Position 973 is a phosphoserine (serine 973).

The protein belongs to the SAPAP family. As to quaternary structure, interacts with DLG1 and DLG4/PSD-95.

The protein resides in the membrane. Its function is as follows. May play a role in the molecular organization of synapses and neuronal cell signaling. Could be an adapter protein linking ion channel to the subsynaptic cytoskeleton. May induce enrichment of PSD-95/SAP90 at the plasma membrane. The sequence is that of Disks large-associated protein 4 (Dlgap4) from Mus musculus (Mouse).